Reading from the N-terminus, the 312-residue chain is Small ribosomal subunit biogenesis GTPase RsgA (312 aa).

In terms of domain architecture, CP-type G spans 86-245 (QSFLKRPAVA…LADTPGFNRP (160 aa)). GTP-binding positions include 135-138 (TKID) and 187-195 (GPSGVGKTS). 4 residues coordinate Zn(2+): Cys270, Cys275, His277, and Cys283.

This sequence belongs to the TRAFAC class YlqF/YawG GTPase family. RsgA subfamily. As to quaternary structure, monomer. Associates with 30S ribosomal subunit, binds 16S rRNA. Zn(2+) is required as a cofactor.

The protein localises to the cytoplasm. In terms of biological role, one of several proteins that assist in the late maturation steps of the functional core of the 30S ribosomal subunit. Helps release RbfA from mature subunits. May play a role in the assembly of ribosomal proteins into the subunit. Circularly permuted GTPase that catalyzes slow GTP hydrolysis, GTPase activity is stimulated by the 30S ribosomal subunit. The chain is Small ribosomal subunit biogenesis GTPase RsgA from Prochlorococcus marinus (strain NATL2A).